A 910-amino-acid chain; its full sequence is DNA mismatch repair protein MutS (910 aa).

An ATP-binding site is contributed by 615–622; it reads GPNMAGKS.

The protein belongs to the DNA mismatch repair MutS family.

Its function is as follows. This protein is involved in the repair of mismatches in DNA. It is possible that it carries out the mismatch recognition step. This protein has a weak ATPase activity. The polypeptide is DNA mismatch repair protein MutS (Clostridium perfringens (strain ATCC 13124 / DSM 756 / JCM 1290 / NCIMB 6125 / NCTC 8237 / Type A)).